The sequence spans 387 residues: Structural protein ORF387 (387 aa).

Residues Lys-315 to Ser-387 adopt a coiled-coil conformation. Residues Leu-365 to Ser-387 form a disordered region.

The protein localises to the virion. The sequence is that of Structural protein ORF387 from Acidianus convivator (ATV).